Here is a 432-residue protein sequence, read N- to C-terminus: Peptidase B (432 aa).

Positions 196 and 201 each coordinate Mn(2+). K208 is a catalytic residue. Residues D219, D278, and E280 each coordinate Mn(2+). R282 is an active-site residue.

It belongs to the peptidase M17 family. In terms of assembly, homohexamer. It depends on Mn(2+) as a cofactor.

It is found in the cytoplasm. It carries out the reaction Release of an N-terminal amino acid, Xaa, from a peptide or arylamide. Xaa is preferably Glu or Asp but may be other amino acids, including Leu, Met, His, Cys and Gln.. Probably plays an important role in intracellular peptide degradation. This Yersinia pseudotuberculosis serotype IB (strain PB1/+) protein is Peptidase B.